We begin with the raw amino-acid sequence, 406 residues long: Interactor protein for cytohesin exchange factors 1 (406 aa).

Residues 13–112 (HADCQGWLYK…WLNKLGFAVT (100 aa)) enclose the PH domain. 3 disordered regions span residues 120–173 (DEEC…FSSL), 253–285 (SLNN…EDDE), and 383–406 (PQDP…ENSL). Residues 123–134 (CYSESEQEDPEV) are compositionally biased toward acidic residues. Residues 144–153 (ASTTSSPVAA) show a composition bias toward low complexity. Position 164 is a phosphoserine (R164). Positions 272–285 (MADREEIKSSEDDE) are enriched in basic and acidic residues. Polar residues predominate over residues 392–406 (EVMNPTSSDCVENSL).

As to quaternary structure, interacts with guanine-nucleotide exchange factors PSCD1, PSCD2, PSCD3 and PSCD4.

The protein resides in the cytoplasm. Its subcellular location is the cell membrane. Its function is as follows. Enhances the promotion of guanine-nucleotide exchange by PSCD2 on ARF6 in a concentration-dependent manner. This Mus musculus (Mouse) protein is Interactor protein for cytohesin exchange factors 1 (Ipcef1).